The following is a 664-amino-acid chain: DNA ligase (664 aa).

NAD(+)-binding positions include 32–36, 81–82, and Glu113; these read DAEYD and SL. Lys115 (N6-AMP-lysine intermediate) is an active-site residue. Residues Arg136, Glu173, Lys289, and Lys313 each coordinate NAD(+). Residues Cys407, Cys410, Cys425, and Cys431 each coordinate Zn(2+). Residues 586-664 enclose the BRCT domain; sequence ASEQPFAGKT…EEQLQAALQS (79 aa).

Belongs to the NAD-dependent DNA ligase family. LigA subfamily. The cofactor is Mg(2+). Mn(2+) is required as a cofactor.

The catalysed reaction is NAD(+) + (deoxyribonucleotide)n-3'-hydroxyl + 5'-phospho-(deoxyribonucleotide)m = (deoxyribonucleotide)n+m + AMP + beta-nicotinamide D-nucleotide.. In terms of biological role, DNA ligase that catalyzes the formation of phosphodiester linkages between 5'-phosphoryl and 3'-hydroxyl groups in double-stranded DNA using NAD as a coenzyme and as the energy source for the reaction. It is essential for DNA replication and repair of damaged DNA. The sequence is that of DNA ligase from Aeromonas salmonicida (strain A449).